The following is a 316-amino-acid chain: Protease HtpX homolog (316 aa).

The helical transmembrane segment at 16 to 36 threads the bilayer; sequence LFMGAGFLIGGATGMMIALVF. His-134 provides a ligand contact to Zn(2+). Residue Glu-135 is part of the active site. His-138 contacts Zn(2+). Helical transmembrane passes span 149–169 and 180–200; these read VTAT…FFGG and LGGM…AMLV. Glu-209 provides a ligand contact to Zn(2+). The segment at 295–316 is disordered; that stretch reads PVMAATTSSSVPLSGERGGPWS.

Belongs to the peptidase M48B family. Zn(2+) serves as cofactor.

The protein resides in the cell inner membrane. The protein is Protease HtpX homolog of Caulobacter vibrioides (strain ATCC 19089 / CIP 103742 / CB 15) (Caulobacter crescentus).